We begin with the raw amino-acid sequence, 567 residues long: Hexose transporter HXT11 (567 aa).

Positions 1-22 (MSGVNNTSANELSTTMSNSNSA) are enriched in polar residues. The tract at residues 1-45 (MSGVNNTSANELSTTMSNSNSAVGAPSVKTEHGDSKNSLNLDANE) is disordered. At 1 to 56 (MSGVNNTSANELSTTMSNSNSAVGAPSVKTEHGDSKNSLNLDANEPPIDLPQKPLS) the chain is on the cytoplasmic side. The helical transmembrane segment at 57 to 77 (AYTTVAILCLMIAFGGFIFGW) threads the bilayer. The Extracellular portion of the chain corresponds to 78–112 (DTGTISGFVNLSDFIRRFGQKNDKGTYYLSKVRMG). N-linked (GlcNAc...) asparagine glycosylation occurs at asparagine 87. A helical transmembrane segment spans residues 113-133 (LIVSIFNIGCAIGGIVLSKVG). Residues 134–139 (DIYGRR) are Cytoplasmic-facing. A helical transmembrane segment spans residues 140-160 (IGLITVTAIYVVGILIQITSI). Topologically, residues 161–170 (NKWYQYFIGR) are extracellular. A helical membrane pass occupies residues 171 to 191 (IISGLGVGGIAVLSPMLISEV). The Cytoplasmic portion of the chain corresponds to 192 to 197 (APKHIR). Residues 198-218 (GTLVQLYQLMGTMGIFLGYCT) traverse the membrane as a helical segment. The Extracellular portion of the chain corresponds to 219–232 (NYGTKNYHNATQWR). The N-linked (GlcNAc...) asparagine glycan is linked to asparagine 227. The chain crosses the membrane as a helical span at residues 233–253 (VGLGLCFAWATFMVSGMMFVP). Over 254-336 (ESPRYLIEVG…IQSLQQLTGD (83 aa)) the chain is Cytoplasmic. The chain crosses the membrane as a helical span at residues 337 to 353 (NYFFYYGTTIFKSVGLK). Over 354–359 (DSFQTS) the chain is Extracellular. A helical membrane pass occupies residues 360-377 (IIIGVVNFFSSFIAVYTI). Topologically, residues 378-384 (ERFGRRT) are cytoplasmic. A helical transmembrane segment spans residues 385–405 (CLLWGAASMLCCFAVFASVGV). The Extracellular portion of the chain corresponds to 406–429 (TKLWPQGSSHQDITSQGAGNCMIV). The chain crosses the membrane as a helical span at residues 430–450 (FTMFFIFSFATTWAGGCYVIV). Residues 451–467 (SETFPLRVKSRGMAIAT) are Cytoplasmic-facing. Residues 468–488 (AANWMWGFLISFFTPFITGAI) form a helical membrane-spanning segment. Residue asparagine 489 is a topological domain, extracellular. Residues 490-510 (FYYGYVFLGCLVFAYFYVFFF) traverse the membrane as a helical segment. At 511–567 (VPETKGLTLEEVNTMWLEGVPAWKSASWVPPERRTADYDADAIDHDNRPIYKRFFSS) the chain is on the cytoplasmic side.

The protein belongs to the major facilitator superfamily. Sugar transporter (TC 2.A.1.1) family.

The protein resides in the membrane. Functionally, probable glucose transporter. The polypeptide is Hexose transporter HXT11 (HXT11) (Saccharomyces cerevisiae (strain ATCC 204508 / S288c) (Baker's yeast)).